The primary structure comprises 599 residues: Glycerophosphodiester phosphodiesterase domain-containing protein 5 (599 aa).

The Cytoplasmic portion of the chain corresponds to 1–42; the sequence is MVKHQPLQYYEPQLCLSCLTGIYGCRWKRYQRSHDDTTKWER. 2 disulfides stabilise this stretch: Cys-15–Cys-18 and Cys-25–Cys-576. A helical transmembrane segment spans residues 43-63; the sequence is LWFLILTSSFFLTLVWFYFWW. Residues 64–87 lie on the Extracellular side of the membrane; sequence EVHNDYNEINWFLYNRMGYWSDWS. The chain crosses the membrane as a helical span at residues 88-108; it reads IPILVTTAAGFTYITVLLILA. The Cytoplasmic segment spans residues 109 to 125; sequence LCHIAVGQQMNLHWLHK. Residues 126–146 traverse the membrane as a helical segment; sequence IGLMTTLITTVVTMSSIAQLW. At 147–160 the chain is on the extracellular side; it reads DDEWEMVFISLQAT. A helical transmembrane segment spans residues 161–181; it reads APFLHIGALAAVTALSWLIAG. Residues 182 to 192 are Cytoplasmic-facing; it reads QFARMEKATSQ. The helical transmembrane segment at 193–213 threads the bilayer; that stretch reads MLMVTAYLAVVVALYLVPLTI. The Extracellular segment spans residues 214–497; sequence SSPCIMEKKA…IWLMPPDEYR (284 aa). Positions 228–485 constitute a GP-PDE domain; it reads PAIIGHRGAP…DSSHVLRKVP (258 aa). Residues Asn-301, Asn-336, Asn-352, Asn-374, and Asn-448 are each glycosylated (N-linked (GlcNAc...) asparagine). Residues 498–518 form a helical membrane-spanning segment; that stretch reads LIWITSDLISFIIIVGVFIFQ. Residues 519–599 are Cytoplasmic-facing; it reads NYHNDQWRLG…DHRDTRLRMN (81 aa).

Belongs to the glycerophosphoryl diester phosphodiesterase family. Interacts with PRDX1; forms a mixed-disulfide with PRDX1, leading to disrupt intramolecular disulfide bond between Cys-25 and Cys-576. In terms of processing, intramolecular disulfide bond between Cys-25 and Cys-576 is reduced by PRDX1. In terms of tissue distribution, detected in mature motor neurons.

The protein localises to the endomembrane system. Its subcellular location is the cytoplasm. It localises to the perinuclear region. It is found in the cell projection. The protein resides in the growth cone. It catalyses the reaction a 1,2-diacyl-sn-glycero-3-phospho-(1D-myo-inositol-4,5-bisphosphate) + H2O = 1D-myo-inositol 1,4,5-trisphosphate + a 1,2-diacyl-sn-glycerol + H(+). The enzyme catalyses sn-glycerol 3-phosphocholine + H2O = sn-glycerol 3-phosphate + choline + H(+). Activated by PRDX1 by reduction of an intramolecular disulfide bond. Its function is as follows. Glycerophosphodiester phosphodiesterase that promotes cell cycle exit and drives spinal motor neuron differentiation. Mediates the cleavage of glycosylphosphatidylinositol (GPI) anchor of target proteins: removes the GPI-anchor of RECK, leading to release RECK from the plasma membrane. May contribute to the osmotic regulation of cellular glycerophosphocholine. This chain is Glycerophosphodiester phosphodiesterase domain-containing protein 5 (GDPD5), found in Gallus gallus (Chicken).